The primary structure comprises 108 residues: uncharacterized protein (108 aa).

Transmembrane regions (helical) follow at residues 26-46 (GAVY…ALII), 54-74 (LMTL…PLIF), and 84-104 (INYQ…CIYM).

It localises to the cell membrane. This is an uncharacterized protein from Methanocaldococcus jannaschii (strain ATCC 43067 / DSM 2661 / JAL-1 / JCM 10045 / NBRC 100440) (Methanococcus jannaschii).